A 52-amino-acid polypeptide reads, in one-letter code: ATP synthase protein 8 (52 aa).

Residues Met7–Phe23 form a helical membrane-spanning segment.

This sequence belongs to the ATPase protein 8 family. In terms of assembly, F-type ATPases have 2 components, CF(1) - the catalytic core - and CF(0) - the membrane proton channel.

Its subcellular location is the mitochondrion membrane. In terms of biological role, mitochondrial membrane ATP synthase (F(1)F(0) ATP synthase or Complex V) produces ATP from ADP in the presence of a proton gradient across the membrane which is generated by electron transport complexes of the respiratory chain. F-type ATPases consist of two structural domains, F(1) - containing the extramembraneous catalytic core and F(0) - containing the membrane proton channel, linked together by a central stalk and a peripheral stalk. During catalysis, ATP synthesis in the catalytic domain of F(1) is coupled via a rotary mechanism of the central stalk subunits to proton translocation. Part of the complex F(0) domain. Minor subunit located with subunit a in the membrane. This Locusta migratoria (Migratory locust) protein is ATP synthase protein 8 (MT-ATP8).